Here is a 238-residue protein sequence, read N- to C-terminus: Leucyl/phenylalanyl-tRNA--protein transferase (238 aa).

This sequence belongs to the L/F-transferase family.

It is found in the cytoplasm. The catalysed reaction is N-terminal L-lysyl-[protein] + L-leucyl-tRNA(Leu) = N-terminal L-leucyl-L-lysyl-[protein] + tRNA(Leu) + H(+). It catalyses the reaction N-terminal L-arginyl-[protein] + L-leucyl-tRNA(Leu) = N-terminal L-leucyl-L-arginyl-[protein] + tRNA(Leu) + H(+). The enzyme catalyses L-phenylalanyl-tRNA(Phe) + an N-terminal L-alpha-aminoacyl-[protein] = an N-terminal L-phenylalanyl-L-alpha-aminoacyl-[protein] + tRNA(Phe). Its function is as follows. Functions in the N-end rule pathway of protein degradation where it conjugates Leu, Phe and, less efficiently, Met from aminoacyl-tRNAs to the N-termini of proteins containing an N-terminal arginine or lysine. This is Leucyl/phenylalanyl-tRNA--protein transferase from Pseudoalteromonas translucida (strain TAC 125).